A 288-amino-acid polypeptide reads, in one-letter code: Thymidylate synthase (288 aa).

Residues Arg-21 and 150-151 (RR) contribute to the dUMP site. The active-site Nucleophile is the Cys-170. DUMP contacts are provided by residues 190 to 193 (RSGD), Asn-201, and 231 to 233 (HIY). Asp-193 contributes to the (6R)-5,10-methylene-5,6,7,8-tetrahydrofolate binding site. Ala-287 is a binding site for (6R)-5,10-methylene-5,6,7,8-tetrahydrofolate.

The protein belongs to the thymidylate synthase family. Bacterial-type ThyA subfamily. In terms of assembly, homodimer.

It is found in the cytoplasm. It catalyses the reaction dUMP + (6R)-5,10-methylene-5,6,7,8-tetrahydrofolate = 7,8-dihydrofolate + dTMP. Its pathway is pyrimidine metabolism; dTTP biosynthesis. Functionally, catalyzes the reductive methylation of 2'-deoxyuridine-5'-monophosphate (dUMP) to 2'-deoxythymidine-5'-monophosphate (dTMP) while utilizing 5,10-methylenetetrahydrofolate (mTHF) as the methyl donor and reductant in the reaction, yielding dihydrofolate (DHF) as a by-product. This enzymatic reaction provides an intracellular de novo source of dTMP, an essential precursor for DNA biosynthesis. The polypeptide is Thymidylate synthase (Acholeplasma laidlawii (strain PG-8A)).